The following is a 204-amino-acid chain: Holliday junction branch migration complex subunit RuvA (204 aa).

Positions 1–64 (MIGRLCGTAE…EDAITLFGFI (64 aa)) are domain I. A domain II region spans residues 65 to 143 (DAAERDWFRL…AMPTGSAFIP (79 aa)). Positions 144–154 (TGTAPPVAPPQ) are flexible linker. The interval 154 to 204 (QGKLADALSALVNLGYRRAEAEAALSAVQAEAGEDAALDELIRGGLRRLAR) is domain III.

This sequence belongs to the RuvA family. As to quaternary structure, homotetramer. Forms an RuvA(8)-RuvB(12)-Holliday junction (HJ) complex. HJ DNA is sandwiched between 2 RuvA tetramers; dsDNA enters through RuvA and exits via RuvB. An RuvB hexamer assembles on each DNA strand where it exits the tetramer. Each RuvB hexamer is contacted by two RuvA subunits (via domain III) on 2 adjacent RuvB subunits; this complex drives branch migration. In the full resolvosome a probable DNA-RuvA(4)-RuvB(12)-RuvC(2) complex forms which resolves the HJ.

The protein localises to the cytoplasm. In terms of biological role, the RuvA-RuvB-RuvC complex processes Holliday junction (HJ) DNA during genetic recombination and DNA repair, while the RuvA-RuvB complex plays an important role in the rescue of blocked DNA replication forks via replication fork reversal (RFR). RuvA specifically binds to HJ cruciform DNA, conferring on it an open structure. The RuvB hexamer acts as an ATP-dependent pump, pulling dsDNA into and through the RuvAB complex. HJ branch migration allows RuvC to scan DNA until it finds its consensus sequence, where it cleaves and resolves the cruciform DNA. The sequence is that of Holliday junction branch migration complex subunit RuvA from Acidiphilium cryptum (strain JF-5).